Consider the following 702-residue polypeptide: Polyribonucleotide nucleotidyltransferase (702 aa).

Positions 493 and 499 each coordinate Mg(2+). The region spanning 559 to 619 (PKVEIFNVDP…NLISQSKEYI (61 aa)) is the KH domain. The S1 motif domain occupies 643-702 (GEEFLGRVQKVVEFGVFVELKEGVDGLLHNSKIKEKLEVGHEIKVKVAEIKNGKVSLDLA).

This sequence belongs to the polyribonucleotide nucleotidyltransferase family. Mg(2+) serves as cofactor.

The protein localises to the cytoplasm. The catalysed reaction is RNA(n+1) + phosphate = RNA(n) + a ribonucleoside 5'-diphosphate. Involved in mRNA degradation. Catalyzes the phosphorolysis of single-stranded polyribonucleotides processively in the 3'- to 5'-direction. The protein is Polyribonucleotide nucleotidyltransferase of Campylobacter lari (strain RM2100 / D67 / ATCC BAA-1060).